A 283-amino-acid polypeptide reads, in one-letter code: Phytanoyl-CoA dioxygenase (283 aa).

Residues Lys99, Met138, 153–155 (HQD), and Trp170 contribute to the 2-oxoglutarate site. Residues His153 and Asp155 each coordinate Fe cation. His238 is a Fe cation binding site. Positions 240 and 249 each coordinate 2-oxoglutarate.

The protein belongs to the PhyH family. The cofactor is Fe cation. It depends on L-ascorbate as a cofactor.

It carries out the reaction phytanoyl-CoA + 2-oxoglutarate + O2 = 2-hydroxyphytanoyl-CoA + succinate + CO2. It functions in the pathway lipid metabolism; fatty acid metabolism. Converts phytanoyl-CoA to 2-hydroxyphytanoyl-CoA. This chain is Phytanoyl-CoA dioxygenase, found in Arabidopsis thaliana (Mouse-ear cress).